Reading from the N-terminus, the 303-residue chain is DDRGK domain-containing protein 1 (303 aa).

Residues 1–2 (MD) are Lumenal-facing. A helical transmembrane segment spans residues 3-23 (LILLIGIATALLIILLTLYFL). Residues 24–303 (QKRNAPAETK…TPVTASEGGA (280 aa)) are Cytoplasmic-facing. Disordered stretches follow at residues 31–53 (ETKA…VPRR) and 84–160 (AIDP…AEVE). Basic and acidic residues predominate over residues 106–160 (LDEKMGAKKRAKMEAKEQKRLQREQELHDREQRKVKEAKEEAERKQQDDLDAEVE).

The protein belongs to the DDRGK1 family. As to quaternary structure, interacts with Atg9; the interaction is transient.

The protein resides in the endoplasmic reticulum membrane. In terms of biological role, substrate adapter for ufmylation, the covalent attachment of the ubiquitin-like modifier UFM1 to substrate proteins. Required for ufmylation of Atg9; protects the nervous system during aging, possibly by stabilizing Atg9 and supporting its function. In Drosophila grimshawi (Hawaiian fruit fly), this protein is DDRGK domain-containing protein 1.